The following is a 119-amino-acid chain: Large ribosomal subunit protein bL17 (119 aa).

It belongs to the bacterial ribosomal protein bL17 family. In terms of assembly, part of the 50S ribosomal subunit. Contacts protein L32.

The polypeptide is Large ribosomal subunit protein bL17 (Malacoplasma penetrans (strain HF-2) (Mycoplasma penetrans)).